The following is a 251-amino-acid chain: Ubiquinone/menaquinone biosynthesis C-methyltransferase UbiE (251 aa).

S-adenosyl-L-methionine contacts are provided by residues threonine 74, aspartate 95, and 123–124 (NA).

This sequence belongs to the class I-like SAM-binding methyltransferase superfamily. MenG/UbiE family.

It catalyses the reaction a 2-demethylmenaquinol + S-adenosyl-L-methionine = a menaquinol + S-adenosyl-L-homocysteine + H(+). The enzyme catalyses a 2-methoxy-6-(all-trans-polyprenyl)benzene-1,4-diol + S-adenosyl-L-methionine = a 5-methoxy-2-methyl-3-(all-trans-polyprenyl)benzene-1,4-diol + S-adenosyl-L-homocysteine + H(+). The protein operates within quinol/quinone metabolism; menaquinone biosynthesis; menaquinol from 1,4-dihydroxy-2-naphthoate: step 2/2. It functions in the pathway cofactor biosynthesis; ubiquinone biosynthesis. Functionally, methyltransferase required for the conversion of demethylmenaquinol (DMKH2) to menaquinol (MKH2) and the conversion of 2-polyprenyl-6-methoxy-1,4-benzoquinol (DDMQH2) to 2-polyprenyl-3-methyl-6-methoxy-1,4-benzoquinol (DMQH2). The sequence is that of Ubiquinone/menaquinone biosynthesis C-methyltransferase UbiE from Shewanella baltica (strain OS155 / ATCC BAA-1091).